Here is an 811-residue protein sequence, read N- to C-terminus: Metal transporter cnnm-1 (811 aa).

The N-terminal stretch at 1–24 (MSASCLRLLTLSLFILGQCNVTAA) is a signal peptide. N-linked (GlcNAc...) asparagine glycosylation is found at Asn20, Asn49, Asn61, and Asn122. The Extracellular portion of the chain corresponds to 25–204 (QNGVDDEVTT…KEYFLPLPLQ (180 aa)). One can recognise a CNNM transmembrane domain in the interval 197–376 (YFLPLPLQIA…TDNGQVSNEL (180 aa)). The helical transmembrane segment at 205 to 225 (IACIGFLLCLSALFSGLTLGL) threads the bilayer. The Cytoplasmic portion of the chain corresponds to 226 to 259 (MSLTPQELELVIKSGAIKEQKCAAKILPVRKKGN). Residues 260-280 (LLLCSLLLGNVIVNSAISILM) form a helical membrane-spanning segment. Residues 281–284 (GELT) are Extracellular-facing. The helical transmembrane segment at 285–305 (TGIYALIGSTMGIVIFGEILP) threads the bilayer. The Cytoplasmic segment spans residues 306–315 (QSICVKKGLE). Residues 316 to 336 (VGAHTISITQLFIFLTFPIAW) traverse the membrane as a helical segment. The Extracellular portion of the chain corresponds to 337–811 (PVSKLLDCLL…EEEMALLDQP (475 aa)). CBS domains lie at 394 to 456 (MTKI…NFTV) and 462 to 530 (YHKH…INDE). Asn435 and Asn453 each carry an N-linked (GlcNAc...) asparagine glycan. Residues 741-760 (DVSHNSSAHNSNLSLVEKPG) form a disordered region. The span at 743-755 (SHNSSAHNSNLSL) shows a compositional bias: low complexity. N-linked (GlcNAc...) asparagine glycosylation is found at Asn745 and Asn752.

This sequence belongs to the ACDP family. Highly expressed in the intestine and in neurons, but it is also expressed in a variety of tissues including the pharynx, hypodermis, rectum and in muscles.

The protein localises to the basolateral cell membrane. Its function is as follows. Probable metal transporter. Probably acts redundantly with the other metal transport proteins cnnm-2, cnnm-3, cnnm-4 and cnnm-5 to regulate Mg(2+) homeostasis. Promotes postembryonic gonad development by regulating Mg(2+) levels, probably via AMPK signaling. This chain is Metal transporter cnnm-1, found in Caenorhabditis elegans.